A 396-amino-acid polypeptide reads, in one-letter code: Probable peptidoglycan glycosyltransferase FtsW (396 aa).

9 helical membrane-spanning segments follow: residues 17–37, 61–81, 83–103, 117–137, 159–179, 198–218, 274–294, 316–336, and 350–370; these read FCDG…WVMV, VFVL…MAWW, ANGP…LVAG, GIPL…VYLA, MVMA…AVVV, FLLL…AEPY, FVFA…VIGL, FAAY…FINI, and LPLL…VGML.

This sequence belongs to the SEDS family. FtsW subfamily.

It localises to the cell inner membrane. It carries out the reaction [GlcNAc-(1-&gt;4)-Mur2Ac(oyl-L-Ala-gamma-D-Glu-L-Lys-D-Ala-D-Ala)](n)-di-trans,octa-cis-undecaprenyl diphosphate + beta-D-GlcNAc-(1-&gt;4)-Mur2Ac(oyl-L-Ala-gamma-D-Glu-L-Lys-D-Ala-D-Ala)-di-trans,octa-cis-undecaprenyl diphosphate = [GlcNAc-(1-&gt;4)-Mur2Ac(oyl-L-Ala-gamma-D-Glu-L-Lys-D-Ala-D-Ala)](n+1)-di-trans,octa-cis-undecaprenyl diphosphate + di-trans,octa-cis-undecaprenyl diphosphate + H(+). The protein operates within cell wall biogenesis; peptidoglycan biosynthesis. Functionally, peptidoglycan polymerase that is essential for cell division. This is Probable peptidoglycan glycosyltransferase FtsW from Halomonas elongata (strain ATCC 33173 / DSM 2581 / NBRC 15536 / NCIMB 2198 / 1H9).